The following is a 259-amino-acid chain: Proteasome subunit alpha (259 aa).

Residues 222–259 (RITGPALEQLIPAEPAPASEPAPESKPDTETKPADPQD) are disordered. Over residues 244–259 (PESKPDTETKPADPQD) the composition is skewed to basic and acidic residues.

Belongs to the peptidase T1A family. As to quaternary structure, the 20S proteasome core is composed of 14 alpha and 14 beta subunits that assemble into four stacked heptameric rings, resulting in a barrel-shaped structure. The two inner rings, each composed of seven catalytic beta subunits, are sandwiched by two outer rings, each composed of seven alpha subunits. The catalytic chamber with the active sites is on the inside of the barrel. Has a gated structure, the ends of the cylinder being occluded by the N-termini of the alpha-subunits. Is capped by the proteasome-associated ATPase, ARC.

The protein localises to the cytoplasm. The protein operates within protein degradation; proteasomal Pup-dependent pathway. The formation of the proteasomal ATPase ARC-20S proteasome complex, likely via the docking of the C-termini of ARC into the intersubunit pockets in the alpha-rings, may trigger opening of the gate for substrate entry. Interconversion between the open-gate and close-gate conformations leads to a dynamic regulation of the 20S proteasome proteolysis activity. Component of the proteasome core, a large protease complex with broad specificity involved in protein degradation. The protein is Proteasome subunit alpha of Rhodococcus jostii (strain RHA1).